The primary structure comprises 330 residues: Ketol-acid reductoisomerase (NADP(+)) (330 aa).

One can recognise a KARI N-terminal Rossmann domain in the interval 2–182; sequence ARLYYDTDAN…GGTRAGILET (181 aa). NADP(+) is bound by residues 25–28, S51, S53, and 83–86; these read YGSQ and DEVQ. H108 is a catalytic residue. Residue G134 coordinates NADP(+). In terms of domain architecture, KARI C-terminal knotted spans 183–328; sequence TFREETETDL…RELRAMFSWL (146 aa). 4 residues coordinate Mg(2+): D191, E195, E227, and E231. S252 is a binding site for substrate.

The protein belongs to the ketol-acid reductoisomerase family. Requires Mg(2+) as cofactor.

It carries out the reaction (2R)-2,3-dihydroxy-3-methylbutanoate + NADP(+) = (2S)-2-acetolactate + NADPH + H(+). The catalysed reaction is (2R,3R)-2,3-dihydroxy-3-methylpentanoate + NADP(+) = (S)-2-ethyl-2-hydroxy-3-oxobutanoate + NADPH + H(+). It participates in amino-acid biosynthesis; L-isoleucine biosynthesis; L-isoleucine from 2-oxobutanoate: step 2/4. Its pathway is amino-acid biosynthesis; L-valine biosynthesis; L-valine from pyruvate: step 2/4. In terms of biological role, involved in the biosynthesis of branched-chain amino acids (BCAA). Catalyzes an alkyl-migration followed by a ketol-acid reduction of (S)-2-acetolactate (S2AL) to yield (R)-2,3-dihydroxy-isovalerate. In the isomerase reaction, S2AL is rearranged via a Mg-dependent methyl migration to produce 3-hydroxy-3-methyl-2-ketobutyrate (HMKB). In the reductase reaction, this 2-ketoacid undergoes a metal-dependent reduction by NADPH to yield (R)-2,3-dihydroxy-isovalerate. This Synechococcus sp. (strain JA-2-3B'a(2-13)) (Cyanobacteria bacterium Yellowstone B-Prime) protein is Ketol-acid reductoisomerase (NADP(+)).